The sequence spans 245 residues: uncharacterized protein (245 aa).

Transmembrane regions (helical) follow at residues 29–51 (LVVLIVSFLSILFSAGYAFRIGM) and 61–83 (TILFYGFVAAAFHFILSLYLMLH).

The protein resides in the cell membrane. This is an uncharacterized protein from Treponema pallidum (strain Nichols).